The sequence spans 481 residues: MNSAYHSPDMSQRIPGPAYSSSAPPPPIHTYQQHQHPPPPLPPPSQHHHSSHPPLPPPPSAPHPHHQHPPPPPPSHSLSSHQHHSQPPHHQSQLPPYAPAPYQQPQPSQYPRPHPHQQHAPSPSQHDEPPPPPPFSGPSPTDHQKDSEYVPPSYSKIEEGSGWKYSLDVKQQPVRARMCGFGDKDRRPITPPPCVRLVIINTETGKEVDYNSLDHAMFVLSVDLWNHDGTKEVNLVRSSTGTGAMASSSTYTYSSLEPGTPSYQQQSLPPSRESGYGQSQGLNYGQDYPPPVQQSYGQAPSYPPSSSYGPPQQYYPRHSGYSAEPSAPPPGAPFRNGYGQDQNALTRMAVVGGQPQGMFTRNLIGSLAASAFRLEDTEGQSGIWFVLQDLSVRTEGTFRLRFSFVNVGRPGGQGTNVNQGRAPILSSCYSESFHVYSAKKFPGVCESTPLSKKFANQGIKIPIRKDANIKGEGDEEMYDQN.

2 disordered regions span residues 1–157 (MNSA…YSKI) and 241–339 (GTGA…NGYG). Composition is skewed to pro residues over residues 36–45 (HPPPPLPPPS), 53–62 (PPLPPPPSAP), and 96–112 (PYAP…QYPR). The region spanning 160-464 (GSGWKYSLDV…ANQGIKIPIR (305 aa)) is the Velvet domain. Low complexity-rich tracts occupy residues 241–255 (GTGA…TYSS) and 293–325 (QQSY…SAEP).

This sequence belongs to the velvet family. VelB subfamily. As to quaternary structure, component of the heterotrimeric velvet complex composed of laeA, veA and velB; VeA acting as a bridging protein between laeA and velB. Forms a heterodimeric complex with vosA; the formation of the velB-vosA complex is light-dependent.

It localises to the nucleus. It is found in the cytoplasm. In terms of biological role, component of the velvet transcription factor complex that controls sexual/asexual developmental ratio in response to light, promoting sexual development in the darkness while stimulating asexual sporulation under illumination. The velvet complex acts as a global regulator for secondary metabolite gene expression. Component of the velB-VosA heterodimeric complex that plays a dual role in activating genes associated with spore maturation and repressing certain development-associated genes. The velB-VosA complex binds DNA through the DNA-binding domain of vosA that recognizes an 11-nucleotide consensus sequence 5'-CTGGCCGCGGC-3' consisting of two motifs in the promoters of key developmental regulatory genes. Controls the biosynthetic gene cluster for beauvericin, a depsipeptide mycotoxin that functions as a virulence determinant. Also regulates chromatin structure and transcription of siderophore biosynthetic genes and is required for infection of tomato plants. In Fusarium oxysporum f. sp. lycopersici (strain 4287 / CBS 123668 / FGSC 9935 / NRRL 34936) (Fusarium vascular wilt of tomato), this protein is Velvet complex subunit B.